Here is a 466-residue protein sequence, read N- to C-terminus: Uronate isomerase (466 aa).

Belongs to the metallo-dependent hydrolases superfamily. Uronate isomerase family.

The catalysed reaction is D-glucuronate = D-fructuronate. The enzyme catalyses aldehydo-D-galacturonate = keto-D-tagaturonate. The protein operates within carbohydrate metabolism; pentose and glucuronate interconversion. The chain is Uronate isomerase from Brucella canis (strain ATCC 23365 / NCTC 10854 / RM-666).